Reading from the N-terminus, the 815-residue chain is Leucine--tRNA ligase (815 aa).

The short motif at 42–52 (PYPSGRLHMGH) is the 'HIGH' region element. The short motif at 574–578 (KMSKS) is the 'KMSKS' region element. An ATP-binding site is contributed by Lys577.

It belongs to the class-I aminoacyl-tRNA synthetase family.

It is found in the cytoplasm. The enzyme catalyses tRNA(Leu) + L-leucine + ATP = L-leucyl-tRNA(Leu) + AMP + diphosphate. In Alcanivorax borkumensis (strain ATCC 700651 / DSM 11573 / NCIMB 13689 / SK2), this protein is Leucine--tRNA ligase.